The chain runs to 496 residues: Maintenance of mitochondrial morphology protein 1 (496 aa).

Topologically, residues 1–22 (MSSQLNDPTPIPAQSSLSFTQG) are lumenal. Residues 23 to 43 (FLLGQLSVVLLIAAFIKFFIF) traverse the membrane as a helical segment. At 44 to 496 (GEAPPPPSRG…SLPGGGVTTT (453 aa)) the chain is on the cytoplasmic side. Disordered stretches follow at residues 50–96 (PSRG…VPSS), 276–331 (PLDT…KSNV), 395–433 (GRTGVRTGDDSETGSNAPRSSTAADASGPAHHEDSSREP), and 449–496 (DLAS…VTTT). Over residues 54-64 (LSHRSATHRRS) the composition is skewed to basic residues. Over residues 65 to 74 (NSIYSSTQHD) the composition is skewed to polar residues. Residues 75–84 (GNTRTLREKP) are compositionally biased toward basic and acidic residues. The span at 85 to 96 (SNSNVLRPVPSS) shows a compositional bias: polar residues. Residues 131-388 (QPESLDWFNV…EPRVQVVGLP (258 aa)) enclose the SMP-LTD domain. The segment covering 276–287 (PLDTPSHSPSPP) has biased composition (pro residues). Polar residues predominate over residues 407–418 (TGSNAPRSSTAA). 2 stretches are compositionally biased toward basic and acidic residues: residues 424–433 (AHHEDSSREP) and 462–474 (GDLRSRSMTREES).

It belongs to the MMM1 family. In terms of assembly, homodimer. Component of the ER-mitochondria encounter structure (ERMES) or MDM complex, composed of mmm1, mdm10, mdm12 and mdm34. A mmm1 homodimer associates with one molecule of mdm12 on each side in a pairwise head-to-tail manner, and the SMP-LTD domains of mmm1 and mdm12 generate a continuous hydrophobic tunnel for phospholipid trafficking.

The protein localises to the endoplasmic reticulum membrane. In terms of biological role, component of the ERMES/MDM complex, which serves as a molecular tether to connect the endoplasmic reticulum (ER) and mitochondria. Components of this complex are involved in the control of mitochondrial shape and protein biogenesis, and function in nonvesicular lipid trafficking between the ER and mitochondria. The mdm12-mmm1 subcomplex functions in the major beta-barrel assembly pathway that is responsible for biogenesis of all outer membrane beta-barrel proteins, and acts in a late step after the SAM complex. The mdm10-mdm12-mmm1 subcomplex further acts in the TOM40-specific pathway after the action of the mdm12-mmm1 complex. Essential for establishing and maintaining the structure of mitochondria and maintenance of mtDNA nucleoids. The protein is Maintenance of mitochondrial morphology protein 1 of Neosartorya fischeri (strain ATCC 1020 / DSM 3700 / CBS 544.65 / FGSC A1164 / JCM 1740 / NRRL 181 / WB 181) (Aspergillus fischerianus).